A 365-amino-acid polypeptide reads, in one-letter code: Fructose-1,6-bisphosphatase class 1 2 (365 aa).

Mg(2+)-binding residues include E100, D122, L124, and D125. Substrate contacts are provided by residues 125 to 128 and N221; that span reads DGSS. Mg(2+) is bound at residue E293.

This sequence belongs to the FBPase class 1 family. In terms of assembly, homotetramer. The cofactor is Mg(2+).

The protein resides in the cytoplasm. The catalysed reaction is beta-D-fructose 1,6-bisphosphate + H2O = beta-D-fructose 6-phosphate + phosphate. Its pathway is carbohydrate biosynthesis; gluconeogenesis. The chain is Fructose-1,6-bisphosphatase class 1 2 from Leptothrix cholodnii (strain ATCC 51168 / LMG 8142 / SP-6) (Leptothrix discophora (strain SP-6)).